A 334-amino-acid polypeptide reads, in one-letter code: Beta-ketoacyl-[acyl-carrier-protein] synthase III (334 aa).

Catalysis depends on residues Cys116 and His256. Residues 257–261 form an ACP-binding region; sequence QANLR. The active site involves Asn286.

It belongs to the thiolase-like superfamily. FabH family. Homodimer.

Its subcellular location is the cytoplasm. It catalyses the reaction malonyl-[ACP] + acetyl-CoA + H(+) = 3-oxobutanoyl-[ACP] + CO2 + CoA. It functions in the pathway lipid metabolism; fatty acid biosynthesis. Functionally, catalyzes the condensation reaction of fatty acid synthesis by the addition to an acyl acceptor of two carbons from malonyl-ACP. Catalyzes the first condensation reaction which initiates fatty acid synthesis and may therefore play a role in governing the total rate of fatty acid production. Possesses both acetoacetyl-ACP synthase and acetyl transacylase activities. Its substrate specificity determines the biosynthesis of branched-chain and/or straight-chain of fatty acids. The protein is Beta-ketoacyl-[acyl-carrier-protein] synthase III of Phocaeicola vulgatus (strain ATCC 8482 / DSM 1447 / JCM 5826 / CCUG 4940 / NBRC 14291 / NCTC 11154) (Bacteroides vulgatus).